The primary structure comprises 68 residues: Neuronal regeneration-related protein (68 aa).

The interval 21-54 is disordered; the sequence is MEGRLPKGRLPVPKEVNRKKNDETNAASLTPLGS. Positions 44-54 are enriched in polar residues; that stretch reads TNAASLTPLGS.

In terms of assembly, interacts with the latency-associated peptides (LAP) of TGFB1 and TGFB2; the interaction results in a decrease in TGFB autoinduction. Interacts with FLNA. In terms of processing, phosphorylated on Ser-59. Phosphorylation decreases stability and activity.

It localises to the cytoplasm. Its function is as follows. May have roles in neural function and cellular differentiation. Ectopic expression promotes axonal regeneration, induces differentiation of fibroblast into myofibroblast, induces myofibroblast ameboid migration, augments motility of gliomas, and increases retinoic-acid regulation of lipid-droplet biogenesis. Down-regulates the expression of TGFB1 and TGFB2 but not of TGFB3. May play a role in the regulation of alveolar generation. The polypeptide is Neuronal regeneration-related protein (NREP) (Macaca fascicularis (Crab-eating macaque)).